Reading from the N-terminus, the 290-residue chain is Glycine--tRNA ligase alpha subunit (290 aa).

Belongs to the class-II aminoacyl-tRNA synthetase family. Tetramer of two alpha and two beta subunits.

It is found in the cytoplasm. The enzyme catalyses tRNA(Gly) + glycine + ATP = glycyl-tRNA(Gly) + AMP + diphosphate. The protein is Glycine--tRNA ligase alpha subunit of Gloeobacter violaceus (strain ATCC 29082 / PCC 7421).